Here is a 121-residue protein sequence, read N- to C-terminus: Large ribosomal subunit protein bL19 (121 aa).

It belongs to the bacterial ribosomal protein bL19 family.

Functionally, this protein is located at the 30S-50S ribosomal subunit interface and may play a role in the structure and function of the aminoacyl-tRNA binding site. This is Large ribosomal subunit protein bL19 from Chlorobaculum tepidum (strain ATCC 49652 / DSM 12025 / NBRC 103806 / TLS) (Chlorobium tepidum).